Here is a 453-residue protein sequence, read N- to C-terminus: Tubulin alpha-1 chain (453 aa).

Positions 11, 71, 144, 145, 179, 206, and 228 each coordinate GTP. Glu-71 serves as a coordination point for Mg(2+). Glu-254 is a catalytic residue. Residues 433–453 are disordered; sequence EEVGAETADGDGEEEEFGEEY.

Belongs to the tubulin family. In terms of assembly, dimer of alpha and beta chains. A typical microtubule is a hollow water-filled tube with an outer diameter of 25 nm and an inner diameter of 15 nM. Alpha-beta heterodimers associate head-to-tail to form protofilaments running lengthwise along the microtubule wall with the beta-tubulin subunit facing the microtubule plus end conferring a structural polarity. Microtubules usually have 13 protofilaments but different protofilament numbers can be found in some organisms and specialized cells. Mg(2+) is required as a cofactor. Undergoes a tyrosination/detyrosination cycle, the cyclic removal and re-addition of a C-terminal tyrosine residue by the enzymes tubulin tyrosine carboxypeptidase (TTCP) and tubulin tyrosine ligase (TTL), respectively.

The protein resides in the cytoplasm. Its subcellular location is the cytoskeleton. The catalysed reaction is GTP + H2O = GDP + phosphate + H(+). Tubulin is the major constituent of microtubules, a cylinder consisting of laterally associated linear protofilaments composed of alpha- and beta-tubulin heterodimers. Microtubules grow by the addition of GTP-tubulin dimers to the microtubule end, where a stabilizing cap forms. Below the cap, tubulin dimers are in GDP-bound state, owing to GTPase activity of alpha-tubulin. The chain is Tubulin alpha-1 chain (TUBA1) from Pelvetia fastigiata (Brown alga).